The following is a 2009-amino-acid chain: Sodium channel protein type 1 subunit alpha (2009 aa).

Residues M1–S128 lie on the Cytoplasmic side of the membrane. Positions R28 to G48 are enriched in basic and acidic residues. A disordered region spans residues R28–N60. The stretch at I110–Q454 is one I repeat. Residues L129–T146 traverse the membrane as a helical segment. The Extracellular segment spans residues M147–D152. Residues W153 to G177 form a helical membrane-spanning segment. At F178–D188 the chain is on the cytoplasmic side. A helical membrane pass occupies residues P189–E205. The Extracellular portion of the chain corresponds to F206–S213. Residue N211 is glycosylated (N-linked (GlcNAc...) asparagine). The chain crosses the membrane as a helical span at residues A214–T235. At I236–K245 the chain is on the cytoplasmic side. The helical transmembrane segment at K246 to F269 threads the bilayer. At M270–S369 the chain is on the extracellular side. Intrachain disulfides connect C277-C345 and C336-C351. N284, N295, N301, N306, and N338 each carry an N-linked (GlcNAc...) asparagine glycan. Residues W370–W384 constitute an intramembrane region (pore-forming). At E385–K397 the chain is on the extracellular side. Residues T398–A423 form a helical membrane-spanning segment. Topologically, residues M424 to P768 are cytoplasmic. The interval Q455–I529 is disordered. Residues E456–A466 are compositionally biased toward low complexity. Residue S470 is modified to Phosphoserine. Over residues L479 to K492 the composition is skewed to low complexity. The span at K495 to Q506 shows a compositional bias: basic residues. Basic and acidic residues predominate over residues F520–I529. Phosphoserine is present on residues S523, S525, S550, S551, S607, and S730. The disordered stretch occupies residues V584–R627. The span at D593–S607 shows a compositional bias: basic and acidic residues. The stretch at C750 to G1022 is one II repeat. The chain crosses the membrane as a helical span at residues F769–M787. Over E788–N797 the chain is Extracellular. Residues N798–I820 traverse the membrane as a helical segment. Residues A821–E830 lie on the Cytoplasmic side of the membrane. A helical transmembrane segment spans residues G831–L849. The Extracellular segment spans residues A850–G854. The helical transmembrane segment at L855–P874 threads the bilayer. The Cytoplasmic portion of the chain corresponds to T875 to G891. The helical transmembrane segment at N892–F912 threads the bilayer. The Extracellular segment spans residues G913–F938. A disulfide bridge connects residues C921 and C927. The segment at residues H939 to W952 is an intramembrane region (pore-forming). Over I953 to Q965 the chain is Extracellular. A disulfide bridge links C959 with C968. A helical membrane pass occupies residues A966 to L992. Topologically, residues S993–N1218 are cytoplasmic. The tract at residues T1129 to V1163 is disordered. The stretch at R1200–L1514 is one III repeat. Residues W1219–F1237 form a helical membrane-spanning segment. The Extracellular segment spans residues E1238–T1250. The helical transmembrane segment at M1251–Y1276 threads the bilayer. Residues Q1277–T1278 are Cytoplasmic-facing. The helical transmembrane segment at Y1279–L1304 threads the bilayer. Topologically, residues G1305–K1313 are extracellular. The helical transmembrane segment at S1314–G1332 threads the bilayer. The Cytoplasmic segment spans residues M1333 to P1345. The helical transmembrane segment at S1346 to F1369 threads the bilayer. Residues A1370–F1415 lie on the Extracellular side of the membrane. Cysteines 1376 and 1396 form a disulfide. N-linked (GlcNAc...) asparagine glycosylation is found at N1378, N1392, and N1403. The segment at residues D1416–G1433 is an intramembrane region (pore-forming). Over W1434–L1457 the chain is Extracellular. A helical membrane pass occupies residues Y1458 to I1483. At D1484 to Q1541 the chain is on the cytoplasmic side. S1516 carries the phosphoserine; by PKC modification. The stretch at I1523 to Q1821 is one IV repeat. The helical transmembrane segment at V1542–V1560 threads the bilayer. Topologically, residues E1561–T1571 are extracellular. The interval E1561–T1571 is S1-S2 loop of repeat IV. A helical transmembrane segment spans residues I1572–I1593. The Cytoplasmic portion of the chain corresponds to S1594–T1601. The chain crosses the membrane as a helical span at residues I1602–E1623. The S3b-S4 loop of repeat IV stretch occupies residues M1619 to R1636. Over L1624–R1636 the chain is Extracellular. A helical membrane pass occupies residues V1637 to G1655. Residues I1656 to M1665 are Cytoplasmic-facing. The helical transmembrane segment at S1666–G1688 threads the bilayer. Over M1689–G1711 the chain is Extracellular. Positions N1712 to W1726 form an intramembrane region, pore-forming. The Extracellular portion of the chain corresponds to D1727 to P1759. Cysteines 1741 and 1756 form a disulfide. Residues S1760 to N1788 traverse the membrane as a helical segment. Residues F1789–K2009 lie on the Cytoplasmic side of the membrane. The 30-residue stretch at E1915–K1944 folds into the IQ domain. The tract at residues Y1986 to K2009 is disordered. A compositionally biased stretch (basic and acidic residues) spans R1988–K2009.

Belongs to the sodium channel (TC 1.A.1.10) family. Nav1.1/SCN1A subfamily. In terms of assembly, the Nav1.1 voltage-gated sodium channel consists of an ion-conducting alpha subunit SCN1A which is functional on its own regulated by one or more beta-1 (SCN1B), beta-2 (SCN2B), beta-3 (SCN3B) and beta-4 (SCN4B) subunits. SCN1B and SCN3B are non-covalently associated with SCN1A. SCN2B and SCN4B are disulfide-linked to SCN1A. SCN1B regulates both the expression at the plasma membrane and the voltage dependence of Nav1.1 inactivation. SCN3B and SCN4B reduce Nav1.1 conductance. Probably interacts with TMEM233; modulates the gating properties of NaV1.1. Interacts with FGF13; regulates the steady-state inactivation of Nav.1.1. Phosphorylation at Ser-1516 by PKC in a highly conserved cytoplasmic loop slows inactivation of the sodium channel and reduces peak sodium currents.

The protein localises to the cell membrane. It catalyses the reaction Na(+)(in) = Na(+)(out). Activated by the spider toxins Hm1a and Hm1b (H.maculata, AC P60992 and AC P0DOC5) eliciting acute pain and mechanical allodynia. Inhibited by the conotoxin GVIIJ. Inhibited by the spider beta/delta-theraphotoxin-Pre1a. Functionally, pore-forming subunit of Nav1.1, a voltage-gated sodium (Nav) channel that directly mediates the depolarizing phase of action potentials in excitable membranes. Navs, also called VGSCs (voltage-gated sodium channels) or VDSCs (voltage-dependent sodium channels), operate by switching between closed and open conformations depending on the voltage difference across the membrane. In the open conformation they allow Na(+) ions to selectively pass through the pore, along their electrochemical gradient. The influx of Na(+) ions provokes membrane depolarization, initiating the propagation of electrical signals throughout cells and tissues. By regulating the excitability of neurons, ensures that they respond appropriately to synaptic inputs, maintaining the balance between excitation and inhibition in brain neural circuits. Nav1.1 plays a role in controlling the excitability and action potential propagation from somatosensory neurons, thereby contributing to the sensory perception of mechanically-induced pain. This Homo sapiens (Human) protein is Sodium channel protein type 1 subunit alpha.